Reading from the N-terminus, the 226-residue chain is Phosphoenolpyruvate guanylyltransferase (226 aa).

The phosphoenolpyruvate site is built by Thr-145, Gly-161, and Ser-164.

Belongs to the CofC family.

The enzyme catalyses phosphoenolpyruvate + GTP + H(+) = enolpyruvoyl-2-diphospho-5'-guanosine + diphosphate. Its pathway is cofactor biosynthesis; coenzyme F420 biosynthesis. Its function is as follows. Guanylyltransferase that catalyzes the activation of phosphoenolpyruvate (PEP) as enolpyruvoyl-2-diphospho-5'-guanosine, via the condensation of PEP with GTP. It is involved in the biosynthesis of coenzyme F420, a hydride carrier cofactor. This is Phosphoenolpyruvate guanylyltransferase from Nocardia farcinica (strain IFM 10152).